A 662-amino-acid chain; its full sequence is Polyunsaturated fatty acid lipoxygenase ALOX15 (662 aa).

The PLAT domain maps to 2–114 (GLYRIRVSTG…VLSLPEGTGR (113 aa)). In terms of domain architecture, Lipoxygenase spans 115-662 (TVGDDPQGLF…PSIVENSVAI (548 aa)). Fe cation is bound by residues His360, His365, His540, His544, and Ile662.

It belongs to the lipoxygenase family. Interacts with PEBP1; in response to IL13/interleukin-13, prevents the interaction of PEBP1 with RAF1 to activate the ERK signaling cascade. The cofactor is Fe cation.

The protein localises to the cytoplasm. It is found in the cytosol. It localises to the cell membrane. The protein resides in the lipid droplet. It catalyses the reaction (5Z,8Z,11Z,14Z)-eicosatetraenoate + O2 = (12S)-hydroperoxy-(5Z,8Z,10E,14Z)-eicosatetraenoate. It carries out the reaction (9Z,12Z)-octadecadienoate + O2 = (13S)-hydroperoxy-(9Z,11E)-octadecadienoate. The catalysed reaction is (5Z,8Z,11Z,14Z)-eicosatetraenoate + O2 = (15S)-hydroperoxy-(5Z,8Z,11Z,13E)-eicosatetraenoate. The enzyme catalyses (5Z,8Z,11Z,14Z)-eicosatetraenoate + 2 O2 = (14R,15S)-dihydroperoxy-(5Z,8Z,10E,12E)-eicosatetraenoate. It catalyses the reaction (5Z,8Z,11Z,14Z)-eicosatetraenoate + 2 O2 = (8S,15S)-dihydroperoxy-(5Z,9E,11Z,13E)-eicosatetraenoate. It carries out the reaction (14S,15R)-epoxy-(5Z,8Z,11Z)-eicosatrienoate + O2 = (8S)-hydroperoxy-(14S,15R)-epoxy-(5Z,9E,11Z)-eicosatrienoate. The catalysed reaction is (14S,15R)-epoxy-(5Z,8Z,11Z)-eicosatrienoate + O2 = (12S)-hydroperoxy-(14S,15R)-epoxy-(5Z,8Z,10E)-eicosatrienoate. The enzyme catalyses (14R,15S)-epoxy-(5Z,8Z,11Z)-eicosatrienoate + O2 = (5S)-hydroperoxy-(14R,15S)-epoxy-(6E,8Z,11Z)-eicosatrienoate. It catalyses the reaction (14R,15S)-epoxy-(5Z,8Z,11Z)-eicosatrienoate + O2 = (12S)-hydroperoxy-(14R,15S)-epoxy-(5Z,8Z,10E)-eicosatrienoate. It carries out the reaction (15R)-hydroperoxy-(5Z,8Z,11Z,13E)-eicosatetraenoate = 15-oxo-(5Z,8Z,11Z,13E)-eicosatetraenoate + H2O. The catalysed reaction is (15S)-hydroperoxy-(5Z,8Z,11Z,13E)-eicosatetraenoate = (14S,15S)-epoxy-(5Z,8Z,10E,12E)-eicosatetraenoate + H2O. The enzyme catalyses (12S)-hydroperoxy-(5Z,8Z,10E,14Z)-eicosatetraenoate = (8S)-hydroxy-(11S,12S)-epoxy-(5Z,9E,14Z)-eicosatrienoate. It catalyses the reaction (4Z,7Z,10Z,13Z,16Z)-docosapentaenoate + O2 = 14-hydroperoxy-(4Z,7Z,10Z,12E,16Z)-docosapentaenoate. It carries out the reaction (7Z,10Z,13Z,16Z,19Z)-docosapentaenoate + O2 = 14-hydroperoxy-(7Z,10Z,12E,16Z,19Z)-docosapentaenoate. The catalysed reaction is (4Z,7Z,10Z,13Z,16Z,19Z)-docosahexaenoate + O2 = (14S)-hydroperoxy-(4Z,7Z,10Z,12E,16Z,19Z)-docosahexaenoate. The enzyme catalyses (4Z,7Z,10Z,13Z,16Z,19Z)-docosahexaenoate + O2 = (17S)-hydroperoxy-(4Z,7Z,10Z,13Z,15E,19Z)-docosahexaenoate. It catalyses the reaction (7S)-hydroperoxy-(4Z,8E,10Z,13Z,16Z,19Z)-docosahexaenoate + O2 = (7S,14S)-dihydroperoxy-(4Z,8E,10Z,12E,16Z,19Z)-docosahexaenoate. It carries out the reaction (7S)-hydroperoxy-(4Z,8E,10Z,13Z,16Z,19Z)-docosahexaenoate + O2 = (7S,17S)-dihydroperoxy-(4Z,8E,10Z,13Z,15E,19Z)-docosahexaenoate. The catalysed reaction is (4Z,7Z,10Z,13Z,16Z,19Z)-docosahexaenoate + O2 = (11S)-hydroperoxy-(4Z,7Z,9E,13Z,16Z,19Z)-docosahexaenoate. The enzyme catalyses N-(5Z,8Z,11Z,14Z)-eicosatetraenoyl-taurine + O2 = N-(12S)-hydroperoxy-(5Z,8Z,10E,14Z)-eicosatetraenoyl-taurine. It catalyses the reaction N-(5Z,8Z,11Z,14Z)-eicosatetraenoyl-gamma-aminobutanoate + O2 = N-(12S)-hydroperoxy-(5Z,8Z,10E,14Z)-eicosatetraenoyl-gamma-aminobutanoate. It carries out the reaction N-(5Z,8Z,11Z,14Z)-eicosatetraenoyl-glycine + O2 = N-(12S)-hydroperoxy-(5Z,8Z,10E,14Z)-eicosatetraenoyl-glycine. The catalysed reaction is N-(5Z,8Z,11Z,14Z)-eicosatetraenoyl-L-alanine + O2 = N-(12S)-hydroperoxy-(5Z,8Z,10E,14Z)-eicosatetraenoyl-alanine. The enzyme catalyses N-(5Z,8Z,11Z,14Z)-eicosatetraenoyl-taurine + O2 = N-(15S)-hydroperoxy-(5Z,8Z,11Z,13E)-eicosatetraenoyl-taurine. It catalyses the reaction N-(5Z,8Z,11Z,14Z)-eicosatetraenoyl-gamma-aminobutanoate + O2 = N-(15S)-hydroperoxy-(5Z,8Z,11Z,13E)-eicosatetraenoyl-gamma-aminobutanoate. It carries out the reaction N-(5Z,8Z,11Z,14Z)-eicosatetraenoyl-glycine + O2 = N-(15S)-hydroperoxy-(5Z,8Z,11Z,13E)-eicosatetraenoyl-glycine. The catalysed reaction is N-(5Z,8Z,11Z,14Z)-eicosatetraenoyl-L-alanine + O2 = N-(15S)-hydroperoxy-(5Z,8Z,11Z,13E)-eicosatetraenoyl-alanine. It functions in the pathway lipid metabolism; hydroperoxy eicosatetraenoic acid biosynthesis. Functionally, non-heme iron-containing dioxygenase that catalyzes the stereo-specific peroxidation of free and esterified polyunsaturated fatty acids generating a spectrum of bioactive lipid mediators. It inserts peroxyl groups at C12 or C15 of arachidonate ((5Z,8Z,11Z,14Z)-eicosatetraenoate) producing both 12-hydroperoxyeicosatetraenoate/12-HPETE and 15-hydroperoxyeicosatetraenoate/15-HPETE. It may then act on 12-HPETE to produce hepoxilins, which may show pro-inflammatory properties. Can also peroxidize linoleate ((9Z,12Z)-octadecadienoate) to 13-hydroperoxyoctadecadienoate. May participate in the sequential oxidations of DHA ((4Z,7Z,10Z,13Z,16Z,19Z)-docosahexaenoate) to generate specialized pro-resolving mediators (SPMs)like resolvin D5 ((7S,17S)-diHPDHA) and (7S,14S)-diHPDHA, that actively down-regulate the immune response and have anti-aggregation properties with platelets. Can convert epoxy fatty acids to hydroperoxy-epoxides derivatives followed by an intramolecular nucleophilic substitution leading to the formation of monocyclic endoperoxides. Plays an important role during the maintenance of self-tolerance by peroxidizing membrane-bound phosphatidylethanolamine which can then signal the sorting process for clearance of apoptotic cells during inflammation and prevent an autoimmune response. In addition to its role in the immune and inflammatory responses, this enzyme may play a role in epithelial wound healing in the cornea through production of lipoxin A4 (LXA(4)) and docosahexaenoic acid-derived neuroprotectin D1 (NPD1; 10R,17S-HDHA), both lipid autacoids exhibit anti-inflammatory and neuroprotective properties. Furthermore, it may regulate actin polymerization which is crucial for several biological processes such as the phagocytosis of apoptotic cells. It is also implicated in the generation of endogenous ligands for peroxisome proliferator activated receptor (PPAR-gamma), hence modulating macrophage development and function. It may also exert a negative effect on skeletal development by regulating bone mass through this pathway. As well as participates in ER stress and downstream inflammation in adipocytes, pancreatic islets, and liver. Finally, it is also involved in the cellular response to IL13/interleukin-13. This chain is Polyunsaturated fatty acid lipoxygenase ALOX15, found in Pongo abelii (Sumatran orangutan).